The chain runs to 362 residues: Aspartate carbamoyltransferase catalytic subunit (362 aa).

A disordered region spans residues 1-22 (MPKTAMTDSTSKTSTNTASSDM). Over residues 7–20 (TDSTSKTSTNTASS) the composition is skewed to low complexity. Positions 100 and 101 each coordinate carbamoyl phosphate. Lysine 128 lines the L-aspartate pocket. 3 residues coordinate carbamoyl phosphate: arginine 150, histidine 180, and glutamine 183. L-aspartate is bound by residues arginine 214 and arginine 269. Positions 310 and 311 each coordinate carbamoyl phosphate.

This sequence belongs to the aspartate/ornithine carbamoyltransferase superfamily. ATCase family. Heterododecamer (2C3:3R2) of six catalytic PyrB chains organized as two trimers (C3), and six regulatory PyrI chains organized as three dimers (R2).

The catalysed reaction is carbamoyl phosphate + L-aspartate = N-carbamoyl-L-aspartate + phosphate + H(+). The protein operates within pyrimidine metabolism; UMP biosynthesis via de novo pathway; (S)-dihydroorotate from bicarbonate: step 2/3. Functionally, catalyzes the condensation of carbamoyl phosphate and aspartate to form carbamoyl aspartate and inorganic phosphate, the committed step in the de novo pyrimidine nucleotide biosynthesis pathway. This Psychrobacter sp. (strain PRwf-1) protein is Aspartate carbamoyltransferase catalytic subunit.